The chain runs to 360 residues: Ribosomal RNA large subunit methyltransferase M (360 aa).

S-adenosyl-L-methionine-binding positions include Ser190, 223–226 (CPGG), Asp242, Asp262, and Asp280. The Proton acceptor role is filled by Lys309.

This sequence belongs to the class I-like SAM-binding methyltransferase superfamily. RNA methyltransferase RlmE family. RlmM subfamily. As to quaternary structure, monomer.

The protein localises to the cytoplasm. The catalysed reaction is cytidine(2498) in 23S rRNA + S-adenosyl-L-methionine = 2'-O-methylcytidine(2498) in 23S rRNA + S-adenosyl-L-homocysteine + H(+). Functionally, catalyzes the 2'-O-methylation at nucleotide C2498 in 23S rRNA. The polypeptide is Ribosomal RNA large subunit methyltransferase M (Haemophilus ducreyi (strain 35000HP / ATCC 700724)).